The chain runs to 103 residues: Large ribosomal subunit protein bL21 (103 aa).

The protein belongs to the bacterial ribosomal protein bL21 family. Part of the 50S ribosomal subunit. Contacts protein L20.

This protein binds to 23S rRNA in the presence of protein L20. The chain is Large ribosomal subunit protein bL21 from Shewanella putrefaciens (strain CN-32 / ATCC BAA-453).